Reading from the N-terminus, the 551-residue chain is Glucans biosynthesis protein D (551 aa).

A signal peptide (tat-type signal) is located at residues 1 to 32; the sequence is MDRRRFIKGSMAMAAVCGTSGIASLFSQAAFA.

The protein belongs to the OpgD/OpgG family. In terms of processing, predicted to be exported by the Tat system. The position of the signal peptide cleavage has not been experimentally proven.

It is found in the periplasm. It functions in the pathway glycan metabolism; osmoregulated periplasmic glucan (OPG) biosynthesis. Functionally, probably involved in the control of the structural glucose backbone of osmoregulated periplasmic glucans (OPGs). This chain is Glucans biosynthesis protein D, found in Escherichia coli O139:H28 (strain E24377A / ETEC).